We begin with the raw amino-acid sequence, 79 residues long: uncharacterized protein (79 aa).

A signal peptide spans 1–33 (MRFIIRTVMLIALVWIGLLLSGYGVLIGSKENA).

This is an uncharacterized protein from Escherichia coli O157:H7.